Consider the following 413-residue polypeptide: SET and MYND domain-containing protein DDB_G0273591 (413 aa).

In terms of domain architecture, SET spans D6–L311. The MYND-type zinc-finger motif lies at C51–C95. The tract at residues D205–N232 is disordered. The stretch at N216–R243 forms a coiled coil.

Belongs to the class V-like SAM-binding methyltransferase superfamily.

Probable methyltransferase. This is SET and MYND domain-containing protein DDB_G0273591 from Dictyostelium discoideum (Social amoeba).